Consider the following 528-residue polypeptide: Peptide chain release factor 3 (528 aa).

Residues 11-279 (SRRRTFAIIS…GLVDWAPSPQ (269 aa)) enclose the tr-type G domain. GTP-binding positions include 20–27 (SHPDAGKT), 88–92 (DTPGH), and 142–145 (NKLD).

The protein belongs to the TRAFAC class translation factor GTPase superfamily. Classic translation factor GTPase family. PrfC subfamily.

The protein resides in the cytoplasm. Its function is as follows. Increases the formation of ribosomal termination complexes and stimulates activities of RF-1 and RF-2. It binds guanine nucleotides and has strong preference for UGA stop codons. It may interact directly with the ribosome. The stimulation of RF-1 and RF-2 is significantly reduced by GTP and GDP, but not by GMP. The chain is Peptide chain release factor 3 from Pseudoalteromonas atlantica (strain T6c / ATCC BAA-1087).